Here is a 336-residue protein sequence, read N- to C-terminus: Tryptophan--tRNA ligase (336 aa).

ATP is bound by residues 16-18 (QPT) and 24-25 (GN). A 'HIGH' region motif is present at residues 17-25 (PTGQLHLGN). D140 contributes to the L-tryptophan binding site. ATP-binding positions include 152–154 (GED), V191, and 200–204 (KMSKS). The 'KMSKS' region signature appears at 200-204 (KMSKS).

The protein belongs to the class-I aminoacyl-tRNA synthetase family. Homodimer.

It localises to the cytoplasm. The catalysed reaction is tRNA(Trp) + L-tryptophan + ATP = L-tryptophyl-tRNA(Trp) + AMP + diphosphate + H(+). Catalyzes the attachment of tryptophan to tRNA(Trp). This is Tryptophan--tRNA ligase from Gloeobacter violaceus (strain ATCC 29082 / PCC 7421).